The primary structure comprises 332 residues: Glycerol-3-phosphate dehydrogenase [NAD(P)+] (332 aa).

NADPH-binding residues include serine 11, phenylalanine 12, lysine 32, and lysine 106. 3 residues coordinate sn-glycerol 3-phosphate: lysine 106, glycine 137, and serine 139. NADPH is bound at residue alanine 141. Lysine 192, aspartate 245, serine 255, arginine 256, and asparagine 257 together coordinate sn-glycerol 3-phosphate. Lysine 192 serves as the catalytic Proton acceptor. Residue arginine 256 coordinates NADPH. Positions 280 and 282 each coordinate NADPH.

The protein belongs to the NAD-dependent glycerol-3-phosphate dehydrogenase family.

It localises to the cytoplasm. The catalysed reaction is sn-glycerol 3-phosphate + NAD(+) = dihydroxyacetone phosphate + NADH + H(+). The enzyme catalyses sn-glycerol 3-phosphate + NADP(+) = dihydroxyacetone phosphate + NADPH + H(+). It participates in membrane lipid metabolism; glycerophospholipid metabolism. In terms of biological role, catalyzes the reduction of the glycolytic intermediate dihydroxyacetone phosphate (DHAP) to sn-glycerol 3-phosphate (G3P), the key precursor for phospholipid synthesis. The polypeptide is Glycerol-3-phosphate dehydrogenase [NAD(P)+] (Staphylococcus aureus (strain bovine RF122 / ET3-1)).